A 722-amino-acid chain; its full sequence is Dual specificity tyrosine-phosphorylation-regulated kinase 2 (722 aa).

The residue at position 25 (S25) is a Phosphoserine. Positions 54–127 are disordered; the sequence is TTTSLNGNGN…SGELKCNTPM (74 aa). Low complexity predominate over residues 66-119; that stretch reads GNSNSNNNNNIGSPVSSSTTNSSNGGNERGSSTKSNSSSGSGSSGNSASSTGSG. The 297-residue stretch at 198 to 494 folds into the Protein kinase domain; that stretch reads YEILEVIGKG…PDEAAHHEFL (297 aa). ATP is bound by residues 204-212 and K227; that span reads IGKGSFGQV. The active-site Proton acceptor is the D324. Phosphotyrosine; by autocatalysis is present on residues Y356 and Y358. 4 disordered regions span residues 494–519, 557–582, 624–643, and 679–722; these read LQPS…LNSV, TTKS…PDIK, GSGS…LPGT, and TTTH…FGRA. A compositionally biased stretch (low complexity) spans 506–519; the sequence is RMSSSSSSSGLNSV. The span at 557–576 shows a compositional bias: polar residues; that stretch reads TTKSRQQPPSQSHGHAQSNG. Low complexity-rich tracts occupy residues 626-635 and 689-707; these read GSTHHVSSAA and GQQQ…MSHS.

This sequence belongs to the protein kinase superfamily. CMGC Ser/Thr protein kinase family. MNB/DYRK subfamily. Mg(2+) is required as a cofactor. In terms of processing, phosphorylated on serine/threonine residues.

It is found in the cytoplasm. It carries out the reaction L-seryl-[protein] + ATP = O-phospho-L-seryl-[protein] + ADP + H(+). It catalyses the reaction L-threonyl-[protein] + ATP = O-phospho-L-threonyl-[protein] + ADP + H(+). The enzyme catalyses L-tyrosyl-[protein] + ATP = O-phospho-L-tyrosyl-[protein] + ADP + H(+). Autophosphorylates on Tyr-356 and Tyr-358. Its function is as follows. In vitro; can phosphorylate exogenous substrates on Ser and Thr residues. May have a physiological role in development being involved in cellular growth and differentiation. This chain is Dual specificity tyrosine-phosphorylation-regulated kinase 2, found in Drosophila melanogaster (Fruit fly).